Consider the following 241-residue polypeptide: Non-structural protein 1 (241 aa).

It is found in the host cytoplasm. The protein resides in the host nucleus. Functionally, suppresses the RNA silencing-based antiviral response in Drosophila cells. The protein is Non-structural protein 1 (NS) of Influenza C virus (strain C/Mississippi/1980).